The primary structure comprises 669 residues: Exostosin-like 1 (669 aa).

Residues 1–8 (MLWRRKSF) are Cytoplasmic-facing. A helical; Signal-anchor for type II membrane protein membrane pass occupies residues 9 to 29 (WLALSAFWLLLVLLGVFPLRL). Over 30–669 (AVLPGPLPGR…RKKYRSLEKP (640 aa)) the chain is Lumenal. 2 N-linked (GlcNAc...) asparagine glycosylation sites follow: asparagine 263 and asparagine 480. A disulfide bond links cysteine 577 and cysteine 627. The disordered stretch occupies residues 601–621 (RQHPEAVPMDSGDPRPVPEPQ).

This sequence belongs to the glycosyltransferase 47 family.

Its subcellular location is the endoplasmic reticulum membrane. It carries out the reaction 3-O-{[(1-&gt;4)-beta-D-GlcA-(1-&gt;4)-alpha-D-GlcNAc](n)-(1-&gt;4)-beta-D-GlcA-(1-&gt;3)-beta-D-Gal-(1-&gt;3)-beta-D-Gal-(1-&gt;4)-beta-D-Xyl}-L-seryl-[protein] + UDP-N-acetyl-alpha-D-glucosamine = 3-O-{alpha-D-GlcNAc-[(1-&gt;4)-beta-D-GlcA-(1-&gt;4)-alpha-D-GlcNAc](n)-(1-&gt;4)-beta-D-GlcA-(1-&gt;3)-beta-D-Gal-(1-&gt;3)-beta-D-Gal-(1-&gt;4)-beta-D-Xyl}-L-seryl-[protein] + UDP + H(+). The protein operates within protein modification; protein glycosylation. Functionally, glycosyltransferase required for the biosynthesis of heparan-sulfate (HS). Transfers N-acetyl-alpha-D-glucosamine to the nascent HS chain (GlcNAcT-II activity). Appears to lack GlcNAcT I and GlcAT-II activities. The protein is Exostosin-like 1 (Extl1) of Mus musculus (Mouse).